Reading from the N-terminus, the 247-residue chain is Adenosylcobinamide-GDP ribazoletransferase (247 aa).

5 helical membrane passes run 34–54 (IVMFPFIGLILGGVSGLIFIL), 59–79 (CGIPLAALFCILALALLTGGF), 113–133 (GGLALIFVLLAKILVVSELAL), 138–158 (MLAALAAACAAGRGSAVLLMY), and 187–207 (LAVIVATVLLPGMQGLAAMVV).

Belongs to the CobS family. Requires Mg(2+) as cofactor.

It is found in the cell inner membrane. The catalysed reaction is alpha-ribazole + adenosylcob(III)inamide-GDP = adenosylcob(III)alamin + GMP + H(+). It catalyses the reaction alpha-ribazole 5'-phosphate + adenosylcob(III)inamide-GDP = adenosylcob(III)alamin 5'-phosphate + GMP + H(+). The protein operates within cofactor biosynthesis; adenosylcobalamin biosynthesis; adenosylcobalamin from cob(II)yrinate a,c-diamide: step 7/7. Functionally, joins adenosylcobinamide-GDP and alpha-ribazole to generate adenosylcobalamin (Ado-cobalamin). Also synthesizes adenosylcobalamin 5'-phosphate from adenosylcobinamide-GDP and alpha-ribazole 5'-phosphate. In Salmonella dublin (strain CT_02021853), this protein is Adenosylcobinamide-GDP ribazoletransferase.